The following is a 262-amino-acid chain: MRFWGKFFGFVIGFMFGRFFGALLGLWLGHLYDKRPGGGASFSQILGQAKNRQGIFFNTTFAVMGHVAKASGRVTETDIRIATLLMDQMRLTGDARKEAQQAFREGKEPDFDLCSSLQAFRAVTQGRQELVQMFIEIQIQTALSDGELDAAEHAILMTVAQELGYGRQQLDELLKRWQAEFRFHQTSSGNKTSITDAYHLLGITAEATDQEVKRAYRKLMNEHHPDKLVAKGLPPEMMEIANRKAQDIQAAYDRVKSERGMR.

The Periplasmic portion of the chain corresponds to 1–6 (MRFWGK). Residues 7–30 (FFGFVIGFMFGRFFGALLGLWLGH) form a helical membrane-spanning segment. Residues 31–262 (LYDKRPGGGA…DRVKSERGMR (232 aa)) are Cytoplasmic-facing. A J domain is found at 196 to 262 (DAYHLLGITA…DRVKSERGMR (67 aa)).

As to quaternary structure, homodimer.

It localises to the cell inner membrane. In terms of biological role, regulatory DnaK co-chaperone. Direct interaction between DnaK and DjlA is needed for the induction of the wcaABCDE operon, involved in the synthesis of a colanic acid polysaccharide capsule, possibly through activation of the RcsB/RcsC phosphotransfer signaling pathway. The colanic acid capsule may help the bacterium survive conditions outside the host. The chain is Co-chaperone protein DjlA from Shewanella oneidensis (strain ATCC 700550 / JCM 31522 / CIP 106686 / LMG 19005 / NCIMB 14063 / MR-1).